Reading from the N-terminus, the 319-residue chain is 4-hydroxy-3-methylbut-2-enyl diphosphate reductase (319 aa).

Cys18 provides a ligand contact to [4Fe-4S] cluster. Positions 47 and 81 each coordinate (2E)-4-hydroxy-3-methylbut-2-enyl diphosphate. 2 residues coordinate dimethylallyl diphosphate: His47 and His81. Isopentenyl diphosphate-binding residues include His47 and His81. Cys103 contributes to the [4Fe-4S] cluster binding site. His131 contacts (2E)-4-hydroxy-3-methylbut-2-enyl diphosphate. His131 contributes to the dimethylallyl diphosphate binding site. His131 is a binding site for isopentenyl diphosphate. Glu133 functions as the Proton donor in the catalytic mechanism. Thr172 serves as a coordination point for (2E)-4-hydroxy-3-methylbut-2-enyl diphosphate. Residue Cys202 participates in [4Fe-4S] cluster binding. The (2E)-4-hydroxy-3-methylbut-2-enyl diphosphate site is built by Ser230, Ser231, Asn232, and Ser275. Dimethylallyl diphosphate is bound by residues Ser230, Ser231, Asn232, and Ser275. Positions 230, 231, 232, and 275 each coordinate isopentenyl diphosphate.

The protein belongs to the IspH family. The cofactor is [4Fe-4S] cluster.

The catalysed reaction is isopentenyl diphosphate + 2 oxidized [2Fe-2S]-[ferredoxin] + H2O = (2E)-4-hydroxy-3-methylbut-2-enyl diphosphate + 2 reduced [2Fe-2S]-[ferredoxin] + 2 H(+). The enzyme catalyses dimethylallyl diphosphate + 2 oxidized [2Fe-2S]-[ferredoxin] + H2O = (2E)-4-hydroxy-3-methylbut-2-enyl diphosphate + 2 reduced [2Fe-2S]-[ferredoxin] + 2 H(+). The protein operates within isoprenoid biosynthesis; dimethylallyl diphosphate biosynthesis; dimethylallyl diphosphate from (2E)-4-hydroxy-3-methylbutenyl diphosphate: step 1/1. It functions in the pathway isoprenoid biosynthesis; isopentenyl diphosphate biosynthesis via DXP pathway; isopentenyl diphosphate from 1-deoxy-D-xylulose 5-phosphate: step 6/6. Its function is as follows. Catalyzes the conversion of 1-hydroxy-2-methyl-2-(E)-butenyl 4-diphosphate (HMBPP) into a mixture of isopentenyl diphosphate (IPP) and dimethylallyl diphosphate (DMAPP). Acts in the terminal step of the DOXP/MEP pathway for isoprenoid precursor biosynthesis. This Methylocella silvestris (strain DSM 15510 / CIP 108128 / LMG 27833 / NCIMB 13906 / BL2) protein is 4-hydroxy-3-methylbut-2-enyl diphosphate reductase.